Here is a 473-residue protein sequence, read N- to C-terminus: 3-isopropylmalate dehydratase large subunit (473 aa).

3 residues coordinate [4Fe-4S] cluster: cysteine 351, cysteine 414, and cysteine 417.

Belongs to the aconitase/IPM isomerase family. LeuC type 1 subfamily. In terms of assembly, heterodimer of LeuC and LeuD. [4Fe-4S] cluster serves as cofactor.

It catalyses the reaction (2R,3S)-3-isopropylmalate = (2S)-2-isopropylmalate. It participates in amino-acid biosynthesis; L-leucine biosynthesis; L-leucine from 3-methyl-2-oxobutanoate: step 2/4. Its function is as follows. Catalyzes the isomerization between 2-isopropylmalate and 3-isopropylmalate, via the formation of 2-isopropylmaleate. The polypeptide is 3-isopropylmalate dehydratase large subunit (Polaromonas sp. (strain JS666 / ATCC BAA-500)).